Consider the following 394-residue polypeptide: Probable fatty acyl-CoA transferase Rv3272 (394 aa).

D175 acts as the Nucleophile in catalysis.

This sequence belongs to the CoA-transferase III family. Homodimer.

In terms of biological role, probably involved in fatty acid metabolism. Binds to fatty acyl-CoAs of varying carbon chain lengths, with the highest binding affinity for palmitoyl-CoA (C16:0). In vitro, alters the cell wall lipid profile and protects mycobacteria from acidic, oxidative and antibiotic stress. May play a significant role in host-pathogen interaction. In Mycobacterium tuberculosis (strain ATCC 25618 / H37Rv), this protein is Probable fatty acyl-CoA transferase Rv3272.